A 233-amino-acid polypeptide reads, in one-letter code: Eukaryotic translation initiation factor 4E-1 (233 aa).

Residues 1-51 (MVVEDALKTSASEDQAKTETNPKPREEDDEPEEGEIVGDEESASKPSKGIA) are disordered. Residues 14–26 (DQAKTETNPKPRE) are compositionally biased toward basic and acidic residues. Residues 27 to 41 (EDDEPEEGEIVGDEE) show a composition bias toward acidic residues. EIF4G-binding stretches follow at residues 55–58 (HALE) and 65–104 (FDSPAAKSAKTKQEDWGSSIRPIYTFSTVEEFWSIYNNIR). MRNA-binding positions include 76–81 (KQEDWG), K108, and 126–127 (WE). Cysteines 131 and 169 form a disulfide. Residues 152–161 (YTLLGMIGEQ) form an EIF4G-binding region. MRNA contacts are provided by residues 176-181 (RNRQEK) and 221-225 (MRHER).

The protein belongs to the eukaryotic initiation factor 4E family. EIF4F is a multi-subunit complex, the composition of which varies with external and internal environmental conditions. It is composed of at least EIF4A, EIF4E and EIF4G. EIF4E is also known to interact with other partners. In higher plants two isoforms of EIF4F have been identified, named isoform EIF4F and isoform EIF(iso)4F. Isoform EIF4F has subunits p220 and p26, whereas isoform EIF(iso)4F has subunits p82 and p28. In terms of assembly, (Microbial infection) Does not interact with the VPg of Plum pox virus (PPV) strain D. According to the redox status, the Cys-131-Cys-169 disulfide bridge may have a role in regulating protein function by affecting its ability to bind capped mRNA. As to expression, mostly expressed in leaves, flower buds, leaf buds and anthers, to a lower extent in roots, stems and green immature fruit, and, at low levels, in petals.

It localises to the nucleus. Its subcellular location is the cytoplasm. Functionally, component of the protein complex eIF4F, which is involved in the recognition of the mRNA cap, ATP-dependent unwinding of 5'-terminal secondary structure and recruitment of mRNA to the ribosome. Recognizes and binds the 7-methylguanosine-containing mRNA cap during an early step in the initiation of protein synthesis and facilitates ribosome binding by inducing the unwinding of the mRNAs secondary structures. (Microbial infection) Not involved in the plum pox virus (PPV) strain D infection process. This chain is Eukaryotic translation initiation factor 4E-1, found in Prunus domestica (Garden plum).